The primary structure comprises 417 residues: NADH-quinone oxidoreductase subunit D (417 aa).

This sequence belongs to the complex I 49 kDa subunit family. In terms of assembly, NDH-1 is composed of 14 different subunits. Subunits NuoB, C, D, E, F, and G constitute the peripheral sector of the complex.

It localises to the cell inner membrane. The enzyme catalyses a quinone + NADH + 5 H(+)(in) = a quinol + NAD(+) + 4 H(+)(out). NDH-1 shuttles electrons from NADH, via FMN and iron-sulfur (Fe-S) centers, to quinones in the respiratory chain. The immediate electron acceptor for the enzyme in this species is believed to be ubiquinone. Couples the redox reaction to proton translocation (for every two electrons transferred, four hydrogen ions are translocated across the cytoplasmic membrane), and thus conserves the redox energy in a proton gradient. In Halorhodospira halophila (strain DSM 244 / SL1) (Ectothiorhodospira halophila (strain DSM 244 / SL1)), this protein is NADH-quinone oxidoreductase subunit D.